The chain runs to 529 residues: Probable alpha-galactosidase A (529 aa).

A signal peptide spans 1 to 19; that stretch reads MKALFAAITMAHALLQTQA. Cys42 and Cys74 are joined by a disulfide. N-linked (GlcNAc...) asparagine glycans are attached at residues Asn45, Asn83, Asn89, and Asn119. Cys122 and Cys152 are oxidised to a cystine. Asp150 acts as the Nucleophile in catalysis. N-linked (GlcNAc...) asparagine glycosylation is present at Asn199. Asp208 serves as the catalytic Proton donor. Asn351 carries N-linked (GlcNAc...) asparagine glycosylation. In terms of domain architecture, Ricin B-type lectin spans 408–528; it reads RVDAVSTGIV…GLPSGVRVSG (121 aa). Cystine bridges form between Cys425–Cys438 and Cys462–Cys475.

It belongs to the glycosyl hydrolase 27 family.

The protein localises to the secreted. It carries out the reaction Hydrolysis of terminal, non-reducing alpha-D-galactose residues in alpha-D-galactosides, including galactose oligosaccharides, galactomannans and galactolipids.. Functionally, hydrolyzes a variety of simple alpha-D-galactoside as well as more complex molecules such as oligosaccharides and polysaccharides. In Aspergillus terreus (strain NIH 2624 / FGSC A1156), this protein is Probable alpha-galactosidase A (aglA).